We begin with the raw amino-acid sequence, 385 residues long: MKRSLLFSAVLCAASLTSVHAAQPITEPEFASDIVDRYADHIFYGSGATGMALVVIDGNQRVFRSYGETRPGNNVRPQLDSVVRIASLTKLMTSEMLVKLLDQGTVKLNDPLSKYAPPGARVPTYNGTPITLVNLATHTSALPREQPGGAAHRPVFVWPTREQRWKYLSTAKLKAAPGSQAAYSNLAFDLLADALANASGKPYTQLFEEQITRPLGMKDTTYTPSPDQCRRLMVAERGASPCNNTLAAIGSGGVYSTPGDMMRWMQQYLSSDFYQRSNQADRMQTLIYQRAQFTKVIGMDVPGKADALGLGWVYMAPKEGRPGIIQKTGGGGGFITYMAMIPQKNIGAFVVVTRSPLTRFKNMSDGINDLVTELSGNKPLVIPAS.

The first 21 residues, 1–21 (MKRSLLFSAVLCAASLTSVHA), serve as a signal peptide directing secretion.

It belongs to the beta-lactamase family.

Its subcellular location is the cell inner membrane. Its activity is regulated as follows. Inhibited by cefmetazole. Functionally, hydrolyzes the cross-linked dimers tetrapentapeptide (D45) and tetratetrapeptide (D44). Removes the terminal D-alanine from muropeptides and disaccharide pentapeptide M5 with a C-terminal D-Ala-D-Ala dipeptide. Associated with recycling and remodeling of peptidoglycan (PG). This is D-alanyl-D-alanine-carboxypeptidase/endopeptidase AmpH (ampH) from Escherichia coli O157:H7.